The primary structure comprises 195 residues: Probable nicotinate-nucleotide adenylyltransferase (195 aa).

This sequence belongs to the NadD family.

The enzyme catalyses nicotinate beta-D-ribonucleotide + ATP + H(+) = deamido-NAD(+) + diphosphate. The protein operates within cofactor biosynthesis; NAD(+) biosynthesis; deamido-NAD(+) from nicotinate D-ribonucleotide: step 1/1. Catalyzes the reversible adenylation of nicotinate mononucleotide (NaMN) to nicotinic acid adenine dinucleotide (NaAD). The polypeptide is Probable nicotinate-nucleotide adenylyltransferase (Dictyoglomus thermophilum (strain ATCC 35947 / DSM 3960 / H-6-12)).